The chain runs to 364 residues: RNA polymerase sigma factor SigA (364 aa).

The segment at 132-202 is sigma-70 factor domain-2; it reads LAEANLRLVV…TRAIADQART (71 aa). Residues 156-159 carry the Interaction with polymerase core subunit RpoC motif; it reads DLIQ. Positions 211 to 287 are sigma-70 factor domain-3; it reads ETINKLIRVQ…DDVIESPVDY (77 aa). Residues 300–353 form a sigma-70 factor domain-4 region; that stretch reads VMDTLTDREENVLRMRFGLDDGRMHTLEDVGKQFKVTRERIRQIEAKAIKKLRH. The segment at residues 326–345 is a DNA-binding region (H-T-H motif); it reads LEDVGKQFKVTRERIRQIEA.

Belongs to the sigma-70 factor family. RpoD/SigA subfamily. Interacts transiently with the RNA polymerase catalytic core.

Its subcellular location is the cytoplasm. In terms of biological role, sigma factors are initiation factors that promote the attachment of RNA polymerase to specific initiation sites and are then released. This sigma factor is the primary sigma factor during exponential growth. This Lactococcus lactis subsp. cremoris (Streptococcus cremoris) protein is RNA polymerase sigma factor SigA.